The sequence spans 421 residues: Imidazolonepropionase (421 aa).

Residues H81 and H83 each coordinate Fe(3+). The Zn(2+) site is built by H81 and H83. Residues R90, Y153, and H186 each contribute to the 4-imidazolone-5-propanoate site. Y153 is a binding site for N-formimidoyl-L-glutamate. Residue H251 participates in Fe(3+) binding. Residue H251 coordinates Zn(2+). E254 is a binding site for 4-imidazolone-5-propanoate. D326 contributes to the Fe(3+) binding site. Residue D326 participates in Zn(2+) binding. Residues N328 and G330 each coordinate N-formimidoyl-L-glutamate. Residue S331 participates in 4-imidazolone-5-propanoate binding.

This sequence belongs to the metallo-dependent hydrolases superfamily. HutI family. Zn(2+) serves as cofactor. It depends on Fe(3+) as a cofactor.

Its subcellular location is the cytoplasm. The catalysed reaction is 4-imidazolone-5-propanoate + H2O = N-formimidoyl-L-glutamate. The protein operates within amino-acid degradation; L-histidine degradation into L-glutamate; N-formimidoyl-L-glutamate from L-histidine: step 3/3. Its function is as follows. Catalyzes the hydrolytic cleavage of the carbon-nitrogen bond in imidazolone-5-propanoate to yield N-formimidoyl-L-glutamate. It is the third step in the universal histidine degradation pathway. The protein is Imidazolonepropionase of Streptococcus pyogenes serotype M18 (strain MGAS8232).